A 1304-amino-acid chain; its full sequence is Zinc finger CCCH domain-containing protein 4 (1304 aa).

Residues 1-33 (MEAVPGTPPPPPSESPPPPSPPPPSTPSPPPCS) are compositionally biased toward pro residues. The segment at 1 to 387 (MEAVPGTPPP…SDHDKPHQQS (387 aa)) is disordered. The segment covering 53 to 73 (DREDGELEEGELEDDGAEEVQ) has biased composition (acidic residues). Basic and acidic residues predominate over residues 80–99 (ERSRKEKGEKHHSDSEEEKS). Ser92 and Ser94 each carry phosphoserine. Positions 94–128 (SEEEKSHRRLKRKRKKEREKEKRRSKKRRKSKHKR) form a coiled coil. Basic residues predominate over residues 100–130 (HRRLKRKRKKEREKEKRRSKKRRKSKHKRHA). Over residues 135–144 (DFSDFSDDSD) the composition is skewed to acidic residues. Position 155 is a phosphotyrosine (Tyr155). The segment covering 165 to 174 (SHQQYSSSHN) has biased composition (polar residues). Positions 194–218 (EDYENEQYGEYEGDEEEDMGKEDYD) are enriched in acidic residues. Residues 219–235 (DFTKELNQYRRAKEGSS) show a composition bias toward basic and acidic residues. Over residues 238–251 (RGSRGRGRGYRGRG) the composition is skewed to basic residues. Residues 252-264 (SRGGSRGRGMGRG) are compositionally biased toward gly residues. Residues 277-303 (PEDEEDLYEEEIEYGESEEPMGDDDYD) show a composition bias toward acidic residues. Basic and acidic residues predominate over residues 304-320 (DYSKELNQYRRSKDSRG). Basic residues predominate over residues 322–346 (GLSRGRGRGSRGGRGKGMGRGRGRG). Residues 357–368 (NDDEDFYDDDMG) show a composition bias toward acidic residues. A compositionally biased stretch (basic and acidic residues) spans 376–387 (RRSDHDKPHQQS). C3H1-type zinc fingers lie at residues 389–416 (KKGKVICKYFVEGRCTWGDHCNFSHDIE), 418–445 (PKKRELCKFYITGFCARAENCPYMHGDF), and 446–469 (PCKLYHTTGNCINGDDCMFSHDPL). The segment covering 485 to 495 (AEAGAEDEKEV) has biased composition (acidic residues). Residues 485-567 (AEAGAEDEKE…LPTHEPLSPQ (83 aa)) form a disordered region. Composition is skewed to pro residues over residues 506-529 (LPKPPPGVGLLPTPPRPPGPPAPT) and 538-556 (GGPPPPPPPPPPPPGPPQM). Residue Arg599 is modified to Asymmetric dimethylarginine. Disordered regions lie at residues 601 to 691 (PGPG…DSPH), 719 to 970 (PGLV…SHIK), and 994 to 1304 (LPIP…PFCQ). Pro residues predominate over residues 603–622 (PGGPSGPMGPGPNMGPPGPM). Residues 628–660 (PDMHPDMHPDMHPDMHPDMHPDMHPDMHPDMHP) are compositionally biased toward basic and acidic residues. A compositionally biased stretch (pro residues) spans 669-683 (NPGPPMGPGGPPMMP). Residues 778–809 (ALYLRIQQKQQEEERARRLAESSKQDRENEEG) are a coiled coil. Basic and acidic residues predominate over residues 787–804 (QQEEERARRLAESSKQDR). Ser816 and Ser817 each carry phosphoserine. Polar residues predominate over residues 824–852 (SSVTSILKTLRQQTSSRPQASVGEPSSSG). A compositionally biased stretch (basic and acidic residues) spans 869 to 884 (SDPRLSRDPRLSRHAE). Residues Ser913, Ser916, and Ser917 each carry the phosphoserine modification. Residues 913-929 (SLHSSPAGPSSSKGQPP) are compositionally biased toward low complexity. Residues 994-1005 (LPIPKQDVPPVP) show a composition bias toward pro residues. Polar residues-rich tracts occupy residues 1028–1044 (NTRQRPGSTDPSTSGSN) and 1058–1067 (VNVNTPGQSE). The span at 1068-1085 (KPSDPRVRKTPTDPRLQK) shows a compositional bias: basic and acidic residues. Composition is skewed to low complexity over residues 1098 to 1129 (PCPTEASPPAASPSGDSSPPATAPYDPRVLAA) and 1137 to 1146 (SSGQSSVLSG). 4 positions are modified to phosphoserine: Ser1104, Ser1109, Ser1111, and Ser1115. At Thr1119 the chain carries Phosphothreonine. The span at 1204–1220 (KASTDGATATDRYNSYN) shows a compositional bias: polar residues. A compositionally biased stretch (low complexity) spans 1225–1235 (KATAAPTAASS). 2 positions are modified to phosphoserine: Ser1270 and Ser1276.

It belongs to the suppressor of sable family. As to quaternary structure, interacts with WDR82.

It is found in the chromosome. RNA-binding protein that suppresses transcription of long non-coding RNAs (lncRNAs). LncRNAs are defined as transcripts more than 200 nucleotides that are not translated into protein. Together with WDR82, part of a transcription termination checkpoint that promotes transcription termination of lncRNAs and their subsequent degradation by the exosome. The transcription termination checkpoint is activated by the inefficiently spliced first exon of lncRNAs. The sequence is that of Zinc finger CCCH domain-containing protein 4 from Mus musculus (Mouse).